Here is a 190-residue protein sequence, read N- to C-terminus: Recombination protein RecR (190 aa).

The segment at 58–73 (CEQCGALSENELCEIC) adopts a C4-type zinc-finger fold. The Toprim domain maps to 81–167 (NILCIVESPK…TFSKIAQGIP (87 aa)).

It belongs to the RecR family.

Its function is as follows. May play a role in DNA repair. It seems to be involved in an RecBC-independent recombinational process of DNA repair. It may act with RecF and RecO. This chain is Recombination protein RecR, found in Campylobacter jejuni (strain RM1221).